Here is a 438-residue protein sequence, read N- to C-terminus: Myosin light chain kinase, smooth muscle (438 aa).

The region spanning 1 to 241 (FRLVEKKTGK…CTQCLQHPWL (241 aa)) is the Protein kinase domain. An ATP-binding site is contributed by Lys15. A Phosphotyrosine; by ABL1 modification is found at Tyr97. Asp107 acts as the Proton acceptor in catalysis. Residue Tyr157 is modified to Phosphotyrosine; by ABL1. The tract at residues 233–296 (TQCLQHPWLX…SGLSGRKSST (64 aa)) is calmodulin-binding. A phosphoserine mark is found at Ser281, Ser282, Ser294, Ser295, and Ser298. Positions 283–438 (MAMISGLSGR…GEGGEEEEEE (156 aa)) are telokin. A disordered region spans residues 289-309 (LSGRKSSTGSPTSPLNAEKLE). Residues 292–303 (RKSSTGSPTSPL) are compositionally biased toward polar residues. Thr300 carries the post-translational modification Phosphothreonine. Position 301 is a phosphoserine (Ser301). The Ig-like C2-type domain maps to 331–420 (PYFSKTIRDL…GEATCTAELI (90 aa)). Cysteines 352 and 404 form a disulfide.

This sequence belongs to the protein kinase superfamily. CAMK Ser/Thr protein kinase family. As to quaternary structure, all isoforms including Telokin bind calmodulin. Interacts with SVIL. Interacts with CTTN; this interaction is reduced during thrombin-induced endothelial cell (EC) contraction but is promoted by the barrier-protective agonist sphingosine 1-phosphate (S1P) within lamellipodia. A complex made of ABL1, CTTN and MYLK regulates cortical actin-based cytoskeletal rearrangement critical to sphingosine 1-phosphate (S1P)-mediated endothelial cell (EC) barrier enhancement. Binds to NAA10/ARD1 and PTK2B/PYK2. It depends on Mg(2+) as a cofactor. Ca(2+) is required as a cofactor. The C-terminus is deglutamylated by AGTPBP1/CCP1, AGBL1/CCP4 and AGBL4/CCP6, leading to the formation of Myosin light chain kinase, smooth muscle, deglutamylated form. The consequences of C-terminal deglutamylation are unknown. Post-translationally, can probably be down-regulated by phosphorylation. Tyrosine phosphorylation by ABL1 increases kinase activity, reverses MLCK-mediated inhibition of Arp2/3-mediated actin polymerization, and enhances CTTN-binding. Phosphorylation by SRC promotes CTTN binding.

The protein localises to the cytoplasm. The protein resides in the cell projection. It is found in the lamellipodium. Its subcellular location is the cleavage furrow. It localises to the cytoskeleton. The protein localises to the stress fiber. The enzyme catalyses L-seryl-[myosin light chain] + ATP = O-phospho-L-seryl-[myosin light chain] + ADP + H(+). It carries out the reaction L-threonyl-[myosin light chain] + ATP = O-phospho-L-threonyl-[myosin light chain] + ADP + H(+). Calcium/calmodulin-dependent myosin light chain kinase implicated in smooth muscle contraction via phosphorylation of myosin light chains (MLC). Also regulates actin-myosin interaction through a non-kinase activity. Phosphorylates PTK2B/PYK2 and myosin light-chains. Involved in the inflammatory response (e.g. apoptosis, vascular permeability, leukocyte diapedesis), cell motility and morphology, airway hyperreactivity and other activities relevant to asthma. Required for tonic airway smooth muscle contraction that is necessary for physiological and asthmatic airway resistance. Necessary for gastrointestinal motility. Implicated in the regulation of endothelial as well as vascular permeability, probably via the regulation of cytoskeletal rearrangements. In the nervous system it has been shown to control the growth initiation of astrocytic processes in culture and to participate in transmitter release at synapses formed between cultured sympathetic ganglion cells. Critical participant in signaling sequences that result in fibroblast apoptosis. Plays a role in the regulation of epithelial cell survival. Required for epithelial wound healing, especially during actomyosin ring contraction during purse-string wound closure. Mediates RhoA-dependent membrane blebbing. Triggers TRPC5 channel activity in a calcium-dependent signaling, by inducing its subcellular localization at the plasma membrane. Promotes cell migration (including tumor cells) and tumor metastasis. PTK2B/PYK2 activation by phosphorylation mediates ITGB2 activation and is thus essential to trigger neutrophil transmigration during acute lung injury (ALI). May regulate optic nerve head astrocyte migration. Probably involved in mitotic cytoskeletal regulation. Regulates tight junction probably by modulating ZO-1 exchange in the perijunctional actomyosin ring. Mediates burn-induced microvascular barrier injury; triggers endothelial contraction in the development of microvascular hyperpermeability by phosphorylating MLC. Essential for intestinal barrier dysfunction. Mediates Giardia spp.-mediated reduced epithelial barrier function during giardiasis intestinal infection via reorganization of cytoskeletal F-actin and tight junctional ZO-1. Necessary for hypotonicity-induced Ca(2+) entry and subsequent activation of volume-sensitive organic osmolyte/anion channels (VSOAC) in cervical cancer cells. This is Myosin light chain kinase, smooth muscle (MYLK) from Ovis aries (Sheep).